The primary structure comprises 329 residues: Glycerol-3-phosphate dehydrogenase [NAD(P)+] (329 aa).

Residues serine 13, tryptophan 14, histidine 34, and lysine 105 each contribute to the NADPH site. 3 residues coordinate sn-glycerol 3-phosphate: lysine 105, glycine 134, and serine 136. Position 138 (alanine 138) interacts with NADPH. Residues lysine 189, aspartate 242, serine 252, arginine 253, and asparagine 254 each coordinate sn-glycerol 3-phosphate. The active-site Proton acceptor is lysine 189. Arginine 253 serves as a coordination point for NADPH. 2 residues coordinate NADPH: valine 277 and glutamate 279.

The protein belongs to the NAD-dependent glycerol-3-phosphate dehydrogenase family.

The protein localises to the cytoplasm. It catalyses the reaction sn-glycerol 3-phosphate + NAD(+) = dihydroxyacetone phosphate + NADH + H(+). It carries out the reaction sn-glycerol 3-phosphate + NADP(+) = dihydroxyacetone phosphate + NADPH + H(+). It functions in the pathway membrane lipid metabolism; glycerophospholipid metabolism. Functionally, catalyzes the reduction of the glycolytic intermediate dihydroxyacetone phosphate (DHAP) to sn-glycerol 3-phosphate (G3P), the key precursor for phospholipid synthesis. This chain is Glycerol-3-phosphate dehydrogenase [NAD(P)+], found in Legionella pneumophila (strain Corby).